The chain runs to 93 residues: Aspartyl/glutamyl-tRNA(Asn/Gln) amidotransferase subunit C (93 aa).

The protein belongs to the GatC family. As to quaternary structure, heterotrimer of A, B and C subunits.

The enzyme catalyses L-glutamyl-tRNA(Gln) + L-glutamine + ATP + H2O = L-glutaminyl-tRNA(Gln) + L-glutamate + ADP + phosphate + H(+). The catalysed reaction is L-aspartyl-tRNA(Asn) + L-glutamine + ATP + H2O = L-asparaginyl-tRNA(Asn) + L-glutamate + ADP + phosphate + 2 H(+). Functionally, allows the formation of correctly charged Asn-tRNA(Asn) or Gln-tRNA(Gln) through the transamidation of misacylated Asp-tRNA(Asn) or Glu-tRNA(Gln) in organisms which lack either or both of asparaginyl-tRNA or glutaminyl-tRNA synthetases. The reaction takes place in the presence of glutamine and ATP through an activated phospho-Asp-tRNA(Asn) or phospho-Glu-tRNA(Gln). This chain is Aspartyl/glutamyl-tRNA(Asn/Gln) amidotransferase subunit C, found in Nautilia profundicola (strain ATCC BAA-1463 / DSM 18972 / AmH).